Reading from the N-terminus, the 546-residue chain is Cytokine-like nuclear factor N-PAC (546 aa).

Residues 8–66 (LGDLVWGKLGRYPPWPGKIVNPPKDLKKPRGKKCFFVKFFGTEDHAWIKVEQLKPYHAH) form the PWWP domain. 2 stretches are compositionally biased toward basic and acidic residues: residues 91–145 (RRAK…EGKK) and 161–181 (RAQEQSPRKRGRPPKDEKDLT). The disordered stretch occupies residues 91–187 (RRAKGKDQTS…KDLTIPESST (97 aa)). Ser130 is modified (phosphoserine). Residue Lys135 forms a Glycyl lysine isopeptide (Lys-Gly) (interchain with G-Cter in SUMO2) linkage. Ser166 carries the phosphoserine modification. Positions 167–179 (PRKRGRPPKDEKD) form a DNA-binding region, a.T hook. Glycyl lysine isopeptide (Lys-Gly) (interchain with G-Cter in SUMO2) cross-links involve residues Lys175, Lys178, Lys200, and Lys210. Positions 213–216 (DPHF) are interaction with histone H3. Positions 215 to 224 (HFHHFLLSQT) are interaction with KDM1B. Glycyl lysine isopeptide (Lys-Gly) (interchain with G-Cter in SUMO2) cross-links involve residues Lys226, Lys236, Lys239, and Lys268. The interval 260 to 546 (GSITPTDKKI…MSAVYRAYIH (287 aa)) is dehydrogenase domain. Residue 270-284 (GFLGLGLMGSGIVSN) participates in NAD(+) binding. A Glycyl lysine isopeptide (Lys-Gly) (interchain with G-Cter in SUMO2) cross-link involves residue Lys301. NAD(+)-binding residues include Thr355 and Lys498. Residue Ser533 is modified to Phosphoserine.

Belongs to the HIBADH-related family. NP60 subfamily. In terms of assembly, homotetramere. Interacts with MAPK14. Interacts with KDM1B at nucleosomes; this interaction stimulates H3K4me1 and H3K4me2 demethylation. Binds to mononucleosomes. Interacts with GATA4; the interaction is required for a synergistic activation of GATA4 target genes transcription.

The protein localises to the nucleus. The protein resides in the chromosome. Functionally, cytokine-like nuclear factor with chromatin gene reader activity involved in chromatin modification and regulation of gene expression. Acts as a nucleosome-destabilizing factor that is recruited to genes during transcriptional activation. Recognizes and binds histone H3 without a preference for specific epigenetic markers and also binds DNA. Interacts with KDM1B and promotes its histone demethylase activity by facilitating the capture of H3 tails, they form a multifunctional enzyme complex that modifies transcribed chromatin and facilitates Pol II transcription through nucleosomes. Stimulates the acetylation of 'Lys-56' of nucleosomal histone H3 (H3K56ac) by EP300. With GATA4, co-binds a defined set of heart development genes and coregulates their expression during cardiomyocyte differentiation. Regulates p38 MAP kinase activity by mediating stress activation of MAPK14/p38alpha and specifically regulating MAPK14 signaling. Indirectly promotes phosphorylation of MAPK14 and activation of ATF2. The phosphorylation of MAPK14 requires upstream activity of MAP2K4 and MAP2K6. This chain is Cytokine-like nuclear factor N-PAC, found in Mus musculus (Mouse).